Consider the following 265-residue polypeptide: Hydroxyethylthiazole kinase (265 aa).

M50 is a binding site for substrate. Residues R125 and T171 each contribute to the ATP site. G198 is a binding site for substrate.

Belongs to the Thz kinase family. It depends on Mg(2+) as a cofactor.

It catalyses the reaction 5-(2-hydroxyethyl)-4-methylthiazole + ATP = 4-methyl-5-(2-phosphooxyethyl)-thiazole + ADP + H(+). The protein operates within cofactor biosynthesis; thiamine diphosphate biosynthesis; 4-methyl-5-(2-phosphoethyl)-thiazole from 5-(2-hydroxyethyl)-4-methylthiazole: step 1/1. Catalyzes the phosphorylation of the hydroxyl group of 4-methyl-5-beta-hydroxyethylthiazole (THZ). This is Hydroxyethylthiazole kinase from Salmonella schwarzengrund (strain CVM19633).